The following is a 341-amino-acid chain: Phosphoribosylformylglycinamidine cyclo-ligase (341 aa).

Belongs to the AIR synthase family.

It is found in the cytoplasm. The catalysed reaction is 2-formamido-N(1)-(5-O-phospho-beta-D-ribosyl)acetamidine + ATP = 5-amino-1-(5-phospho-beta-D-ribosyl)imidazole + ADP + phosphate + H(+). The protein operates within purine metabolism; IMP biosynthesis via de novo pathway; 5-amino-1-(5-phospho-D-ribosyl)imidazole from N(2)-formyl-N(1)-(5-phospho-D-ribosyl)glycinamide: step 2/2. The chain is Phosphoribosylformylglycinamidine cyclo-ligase from Finegoldia magna (strain ATCC 29328 / DSM 20472 / WAL 2508) (Peptostreptococcus magnus).